We begin with the raw amino-acid sequence, 166 residues long: Monodehydroascorbate reductase, fruit isozyme (166 aa).

This sequence belongs to the FAD-dependent oxidoreductase family. It depends on FAD as a cofactor. In terms of processing, the N-terminus is blocked.

It carries out the reaction 2 monodehydro-L-ascorbate radical + NADH + H(+) = 2 L-ascorbate + NAD(+). Catalyzes the conversion of monodehydroascorbate to ascorbate, oxidizing NADH in the process. This chain is Monodehydroascorbate reductase, fruit isozyme, found in Cucumis sativus (Cucumber).